The sequence spans 106 residues: uncharacterized protein (106 aa).

Its subcellular location is the mitochondrion. This is an uncharacterized protein from Claviceps purpurea (Ergot fungus).